Reading from the N-terminus, the 83-residue chain is U25-theraphotoxin-Cg1a (83 aa).

The signal sequence occupies residues 1–23; the sequence is MRFHTLLFLSFLLLVSCALICTA. The propeptide occupies 24–48; that stretch reads QHPGLEKSGMFHENVGKGQHIEEKR. 3 disulfide bridges follow: Cys50–Cys66, Cys57–Cys71, and Cys65–Cys81.

Belongs to the neurotoxin 07 (Beta/delta-agtx) family. 03 (aga-4) subfamily. JZTX sub-subfamily. As to expression, expressed by the venom gland.

It localises to the secreted. Inhibits TTX-sensitive sodium currents in rat dorsal root ganglion (DRG) neurons. The chain is U25-theraphotoxin-Cg1a from Chilobrachys guangxiensis (Chinese earth tiger tarantula).